The following is a 268-amino-acid chain: Ribosomal RNA small subunit methyltransferase A (268 aa).

Residues N10, I12, G37, E58, D83, and N107 each coordinate S-adenosyl-L-methionine.

It belongs to the class I-like SAM-binding methyltransferase superfamily. rRNA adenine N(6)-methyltransferase family. RsmA subfamily.

The protein localises to the cytoplasm. It catalyses the reaction adenosine(1518)/adenosine(1519) in 16S rRNA + 4 S-adenosyl-L-methionine = N(6)-dimethyladenosine(1518)/N(6)-dimethyladenosine(1519) in 16S rRNA + 4 S-adenosyl-L-homocysteine + 4 H(+). Specifically dimethylates two adjacent adenosines (A1518 and A1519) in the loop of a conserved hairpin near the 3'-end of 16S rRNA in the 30S particle. May play a critical role in biogenesis of 30S subunits. The polypeptide is Ribosomal RNA small subunit methyltransferase A (Caldanaerobacter subterraneus subsp. tengcongensis (strain DSM 15242 / JCM 11007 / NBRC 100824 / MB4) (Thermoanaerobacter tengcongensis)).